The following is a 267-amino-acid chain: 3-methyl-2-oxobutanoate hydroxymethyltransferase (267 aa).

Residues D46 and D85 each coordinate Mg(2+). 3-methyl-2-oxobutanoate-binding positions include 46–47, D85, and K115; that span reads DS. E117 lines the Mg(2+) pocket. The Proton acceptor role is filled by E184.

Belongs to the PanB family. Homodecamer; pentamer of dimers. It depends on Mg(2+) as a cofactor.

It localises to the cytoplasm. It catalyses the reaction 3-methyl-2-oxobutanoate + (6R)-5,10-methylene-5,6,7,8-tetrahydrofolate + H2O = 2-dehydropantoate + (6S)-5,6,7,8-tetrahydrofolate. Its pathway is cofactor biosynthesis; (R)-pantothenate biosynthesis; (R)-pantoate from 3-methyl-2-oxobutanoate: step 1/2. Its function is as follows. Catalyzes the reversible reaction in which hydroxymethyl group from 5,10-methylenetetrahydrofolate is transferred onto alpha-ketoisovalerate to form ketopantoate. The protein is 3-methyl-2-oxobutanoate hydroxymethyltransferase of Geotalea daltonii (strain DSM 22248 / JCM 15807 / FRC-32) (Geobacter daltonii).